Consider the following 42-residue polypeptide: Statherin (42 aa).

Residues 1-6 are hydroxyapatite-binding; inhibits crystal growth; sequence DSSEEK. 2 positions are modified to phosphoserine: Ser2 and Ser3. A disordered region spans residues 18-42; sequence RYGPYQPFVPPPLYPQPYQPYQPQY. The segment at 18–42 is hydrophobic; inhibits precipitation of calcium phosphate salts; the sequence is RYGPYQPFVPPPLYPQPYQPYQPQY. Residues 24-42 are compositionally biased toward pro residues; the sequence is PFVPPPLYPQPYQPYQPQY.

The protein belongs to the histatin/statherin family. In terms of tissue distribution, secreted by parotid and submandibular glands.

It is found in the secreted. Its function is as follows. Salivary protein that stabilizes saliva supersaturated with calcium salts by inhibiting the precipitation of calcium phosphate salts. It also modulates hydroxyapatite crystal formation on the tooth surface. This is Statherin (STATH) from Macaca arctoides (Stump-tailed macaque).